The sequence spans 138 residues: Putative pre-16S rRNA nuclease (138 aa).

The protein belongs to the YqgF nuclease family.

The protein resides in the cytoplasm. Its function is as follows. Could be a nuclease involved in processing of the 5'-end of pre-16S rRNA. The protein is Putative pre-16S rRNA nuclease of Salmonella schwarzengrund (strain CVM19633).